The following is a 251-amino-acid chain: CDP-diacylglycerol pyrophosphatase (251 aa).

Residues 4-24 (AGLLFLVMIVIAVVATGIGYW) form a helical membrane-spanning segment.

Belongs to the Cdh family.

It localises to the cell inner membrane. The catalysed reaction is a CDP-1,2-diacyl-sn-glycerol + H2O = a 1,2-diacyl-sn-glycero-3-phosphate + CMP + 2 H(+). It participates in phospholipid metabolism; CDP-diacylglycerol degradation; phosphatidate from CDP-diacylglycerol: step 1/1. The polypeptide is CDP-diacylglycerol pyrophosphatase (Escherichia coli O45:K1 (strain S88 / ExPEC)).